A 54-amino-acid chain; its full sequence is ATP synthase protein 8 (54 aa).

The chain crosses the membrane as a helical span at residues 13–32; that stretch reads ITFTFVIITLMVYILSKYIL.

It belongs to the ATPase protein 8 family. F-type ATPases have 2 components, CF(1) - the catalytic core - and CF(0) - the membrane proton channel.

It localises to the mitochondrion membrane. Its function is as follows. Mitochondrial membrane ATP synthase (F(1)F(0) ATP synthase or Complex V) produces ATP from ADP in the presence of a proton gradient across the membrane which is generated by electron transport complexes of the respiratory chain. F-type ATPases consist of two structural domains, F(1) - containing the extramembraneous catalytic core and F(0) - containing the membrane proton channel, linked together by a central stalk and a peripheral stalk. During catalysis, ATP synthesis in the catalytic domain of F(1) is coupled via a rotary mechanism of the central stalk subunits to proton translocation. Part of the complex F(0) domain. Minor subunit located with subunit a in the membrane. This is ATP synthase protein 8 (atp-8) from Neurospora crassa (strain ATCC 24698 / 74-OR23-1A / CBS 708.71 / DSM 1257 / FGSC 987).